The chain runs to 141 residues: Acetyltransferase YpeA (141 aa).

Residues 1–141 (MEIRVFRQED…GKRLIEDEEY (141 aa)) form the N-acetyltransferase domain.

It belongs to the acetyltransferase family. YpeA subfamily.

The sequence is that of Acetyltransferase YpeA from Escherichia coli O157:H7.